We begin with the raw amino-acid sequence, 363 residues long: Tetraacyldisaccharide 4'-kinase (363 aa).

78–85 (TVGGNGKT) is an ATP binding site.

This sequence belongs to the LpxK family.

The catalysed reaction is a lipid A disaccharide + ATP = a lipid IVA + ADP + H(+). It functions in the pathway glycolipid biosynthesis; lipid IV(A) biosynthesis; lipid IV(A) from (3R)-3-hydroxytetradecanoyl-[acyl-carrier-protein] and UDP-N-acetyl-alpha-D-glucosamine: step 6/6. Transfers the gamma-phosphate of ATP to the 4'-position of a tetraacyldisaccharide 1-phosphate intermediate (termed DS-1-P) to form tetraacyldisaccharide 1,4'-bis-phosphate (lipid IVA). The polypeptide is Tetraacyldisaccharide 4'-kinase (Wigglesworthia glossinidia brevipalpis).